The primary structure comprises 145 residues: 6-pyruvoyl tetrahydrobiopterin synthase (145 aa).

At Ser-19 the chain carries Phosphoserine. Position 24 (His-24) interacts with Zn(2+). Phosphoserine is present on Ser-28. Cys-43 (proton acceptor) is an active-site residue. His-49 and His-51 together coordinate Zn(2+). Residue His-90 is the Charge relay system of the active site. At Tyr-128 the chain carries Phosphotyrosine. Catalysis depends on Glu-134, which acts as the Charge relay system.

It belongs to the PTPS family. As to quaternary structure, homohexamer formed of two homotrimers in a head to head fashion. Zn(2+) serves as cofactor. Phosphorylation of Ser-19 is required for maximal enzyme activity.

The enzyme catalyses 7,8-dihydroneopterin 3'-triphosphate = 6-pyruvoyl-5,6,7,8-tetrahydropterin + triphosphate + H(+). It functions in the pathway cofactor biosynthesis; tetrahydrobiopterin biosynthesis; tetrahydrobiopterin from 7,8-dihydroneopterin triphosphate: step 1/3. Functionally, involved in the biosynthesis of tetrahydrobiopterin, an essential cofactor of aromatic amino acid hydroxylases. Catalyzes the transformation of 7,8-dihydroneopterin triphosphate into 6-pyruvoyl tetrahydropterin. The polypeptide is 6-pyruvoyl tetrahydrobiopterin synthase (PTS) (Pongo abelii (Sumatran orangutan)).